The chain runs to 435 residues: Adenylosuccinate synthetase (435 aa).

GTP contacts are provided by residues 11–17 and 39–41; these read GDEGKGK and GHT. The Proton acceptor role is filled by Asp12. Mg(2+)-binding residues include Asp12 and Gly39. Residues 12–15, 37–40, Thr128, Arg142, Gln223, Thr238, and Arg302 contribute to the IMP site; these read DEGK and NAGH. His40 acts as the Proton donor in catalysis. Residue 298-304 participates in substrate binding; it reads SVTGRPR. GTP-binding positions include Arg304, 330–332, and 412–414; these read KLD and STG.

This sequence belongs to the adenylosuccinate synthetase family. In terms of assembly, homodimer. It depends on Mg(2+) as a cofactor.

It is found in the cytoplasm. The catalysed reaction is IMP + L-aspartate + GTP = N(6)-(1,2-dicarboxyethyl)-AMP + GDP + phosphate + 2 H(+). It participates in purine metabolism; AMP biosynthesis via de novo pathway; AMP from IMP: step 1/2. Its function is as follows. Plays an important role in the de novo pathway of purine nucleotide biosynthesis. Catalyzes the first committed step in the biosynthesis of AMP from IMP. The polypeptide is Adenylosuccinate synthetase (Coxiella burnetii (strain RSA 331 / Henzerling II)).